Here is a 500-residue protein sequence, read N- to C-terminus: Carnosic acid synthase (500 aa).

A helical transmembrane segment spans residues 4–24 (LILLSLAFLASCVVAYSRRRP). Cys443 is a binding site for heme.

It belongs to the cytochrome P450 family. It depends on heme as a cofactor. Mostly expressed in young leaves, particularly in glandular trichomes.

The protein localises to the membrane. The enzyme catalyses 11-hydroxyferruginol + 3 reduced [NADPH--hemoprotein reductase] + 3 O2 = carnosate + 3 oxidized [NADPH--hemoprotein reductase] + 4 H2O + 4 H(+). The catalysed reaction is miltiradiene + 2 reduced [NADPH--hemoprotein reductase] + 2 O2 = miltiradien-20-al + 2 oxidized [NADPH--hemoprotein reductase] + 3 H2O + 2 H(+). It catalyses the reaction ferruginol + 3 reduced [NADPH--hemoprotein reductase] + 3 O2 = pisiferate + 3 oxidized [NADPH--hemoprotein reductase] + 4 H2O + 4 H(+). It functions in the pathway secondary metabolite biosynthesis; terpenoid biosynthesis. Its function is as follows. Monooxygenase involved in the biosynthesis of carnosate, a potent antioxidant labdane-related diterpene natural product. Catalyzes the oxidation of 11-hydroxyferruginol to produce carnosate. Mediates the conversion of miltiradien into miltiradien-20-al. Also involved in the production of pisiferic acid and derivative products from ferruginol. The chain is Carnosic acid synthase from Salvia fruticosa (Greek sage).